The chain runs to 359 residues: DNA-directed RNA polymerase RPB3-11 homolog (359 aa).

The protein in the N-terminal section; belongs to the archaeal RpoD/eukaryotic RPB3 RNA polymerase subunit family. This sequence in the C-terminal section; belongs to the archaeal RpoL/eukaryotic RPB11/RPC19 RNA polymerase subunit family. In terms of assembly, part of the viral DNA-directed RNA polymerase that consists of 8 polII-like subunits (RPB1, RPB2, RPB3, RPB5, RPB6, RPB7, RPB9, RPB10), a capping enzyme and a termination factor.

Its subcellular location is the host cytoplasm. The protein resides in the virion. Its function is as follows. Component of the DNA-directed RNA polymerase (RNAP) that catalyzes the transcription in the cytoplasm of viral DNA into RNA using the four ribonucleoside triphosphates as substrates. The sequence is that of DNA-directed RNA polymerase RPB3-11 homolog from Ornithodoros (relapsing fever ticks).